The sequence spans 648 residues: Activatory protein CHA4 (648 aa).

Over residues methionine 1–leucine 10 the composition is skewed to pro residues. Residues methionine 1–proline 37 are disordered. The span at threonine 11–leucine 22 shows a compositional bias: low complexity. Residues cysteine 44–cysteine 70 constitute a DNA-binding region (zn(2)-C6 fungal-type). Residues alanine 140 to proline 177 form a disordered region. Serine 164 and serine 166 each carry phosphoserine.

Its subcellular location is the nucleus. Functionally, activates the CHA1 gene for L-serine dehydratase. Binds to the DNA sequence 5'-GVGGARAYRTRATTCCRC-3'. The chain is Activatory protein CHA4 (CHA4) from Saccharomyces cerevisiae (strain ATCC 204508 / S288c) (Baker's yeast).